The chain runs to 506 residues: Cytochrome P450 monooxygenase TES1 (506 aa).

Residues 26 to 46 (MSVVLAGLILLASIYFPRFMF) traverse the membrane as a helical segment. Asn167, Asn201, Asn298, and Asn427 each carry an N-linked (GlcNAc...) asparagine glycan. Residue Cys440 participates in heme binding.

It belongs to the cytochrome P450 family. Heme serves as cofactor.

The protein localises to the membrane. It participates in phytotoxin biosynthesis. Cytochrome P450 monooxygenase; part of the gene cluster that mediates the biosynthesis of the phytotoxin tentoxin, an inhibitor the F1-ATPase activity of chloroplasts, resulting in chlorosis in sensitive plants. Tentoxin is a cyclic tetrapeptide that consists of four amino acid residues: glycine (Gly), alanine (Ala), leucine (Leu), and dehydrophenylalanine (DPhe). In addition, both the Ala and DPhe residues are N-methylated. The nonribosomal peptide synthetase TES assembles tentoxin from the four substrate amino acids. The adenylation domains of each of the 4 modules are responsible for the activation of Gly, Ala, Leu and DPhe, respectively. In addition, the N-methyltransferase domains in the second and fourth modules of TES could be responsible for N-methylation of Ala and DPhe residues. Finally, the condensation domain located in the termination module probably catalyzes the formation of the intramolecular macrocyclization and then the release of tentoxin. The cytochrome P450 monooxygenase TES1 is predicted to be involved in the formation of DPhe. This chain is Cytochrome P450 monooxygenase TES1, found in Alternaria alternata (Alternaria rot fungus).